The following is a 264-amino-acid chain: E3 ubiquitin-protein ligase MARCHF8 (264 aa).

A disordered region spans residues 15-47 (LGHSVSRSSNISKAGSPTSVSAPSSFPRTSVTP). Residues 17 to 47 (HSVSRSSNISKAGSPTSVSAPSSFPRTSVTP) show a composition bias toward polar residues. The RING-CH-type zinc-finger motif lies at 45 to 106 (VTPSSQDICR…ELCKFEFIME (62 aa)). Residues cysteine 53, cysteine 56, cysteine 70, cysteine 72, histidine 80, cysteine 83, cysteine 96, and cysteine 99 each contribute to the Zn(2+) site. 2 consecutive transmembrane segments (helical) span residues 130 to 150 (CSVTFHVIAITCVVWSLYVLI) and 170 to 190 (FWTKLVVVAIGFTGGLLFMYV).

It localises to the cytoplasmic vesicle membrane. The protein localises to the lysosome membrane. The protein resides in the early endosome membrane. It catalyses the reaction S-ubiquitinyl-[E2 ubiquitin-conjugating enzyme]-L-cysteine + [acceptor protein]-L-lysine = [E2 ubiquitin-conjugating enzyme]-L-cysteine + N(6)-ubiquitinyl-[acceptor protein]-L-lysine.. It functions in the pathway protein modification; protein ubiquitination. E3 ubiquitin-protein ligase that mediates ubiquitination of cd86 and MHC class II proteins, such as hla-dr alpha and beta, and promotes their subsequent endocytosis and sorting to lysosomes via multivesicular bodies. This is E3 ubiquitin-protein ligase MARCHF8 (marchf8) from Xenopus tropicalis (Western clawed frog).